The following is a 176-amino-acid chain: 3-hydroxydecanoyl-[acyl-carrier-protein] dehydratase (176 aa).

The active site involves His71.

The protein belongs to the thioester dehydratase family. FabA subfamily. As to quaternary structure, homodimer.

Its subcellular location is the cytoplasm. It catalyses the reaction a (3R)-hydroxyacyl-[ACP] = a (2E)-enoyl-[ACP] + H2O. It carries out the reaction (3R)-hydroxydecanoyl-[ACP] = (2E)-decenoyl-[ACP] + H2O. The catalysed reaction is (2E)-decenoyl-[ACP] = (3Z)-decenoyl-[ACP]. The protein operates within lipid metabolism; fatty acid biosynthesis. Functionally, necessary for the introduction of cis unsaturation into fatty acids. Catalyzes the dehydration of (3R)-3-hydroxydecanoyl-ACP to E-(2)-decenoyl-ACP and then its isomerization to Z-(3)-decenoyl-ACP. Can catalyze the dehydratase reaction for beta-hydroxyacyl-ACPs with saturated chain lengths up to 16:0, being most active on intermediate chain length. The sequence is that of 3-hydroxydecanoyl-[acyl-carrier-protein] dehydratase from Rhodopseudomonas palustris (strain BisA53).